The following is a 268-amino-acid chain: Energy-coupling factor transporter transmembrane protein EcfT (268 aa).

5 helical membrane-spanning segments follow: residues 28-48 (FVFL…YLWV), 63-83 (LWFL…TLMM), 107-127 (ILEG…ATIM), 152-172 (LPVH…PTLM), and 248-268 (ISLT…YSGV).

The protein belongs to the energy-coupling factor EcfT family. Forms a stable energy-coupling factor (ECF) transporter complex composed of 2 membrane-embedded substrate-binding proteins (S component), 2 ATP-binding proteins (A component) and 2 transmembrane proteins (T component). May be able to interact with more than 1 S component at a time.

Its subcellular location is the cell membrane. Functionally, transmembrane (T) component of an energy-coupling factor (ECF) ABC-transporter complex. Unlike classic ABC transporters this ECF transporter provides the energy necessary to transport a number of different substrates. The polypeptide is Energy-coupling factor transporter transmembrane protein EcfT (Staphylococcus aureus (strain 04-02981)).